The chain runs to 223 residues: Octanoyltransferase (223 aa).

In terms of domain architecture, BPL/LPL catalytic spans 32-207 (DETPDEIWLV…HFAHHLAITD (176 aa)). Substrate is bound by residues 71–78 (RGGQVTYH), 138–140 (SLG), and 151–153 (GLA). Residue Cys-169 is the Acyl-thioester intermediate of the active site.

The protein belongs to the LipB family.

The protein localises to the cytoplasm. It catalyses the reaction octanoyl-[ACP] + L-lysyl-[protein] = N(6)-octanoyl-L-lysyl-[protein] + holo-[ACP] + H(+). It functions in the pathway protein modification; protein lipoylation via endogenous pathway; protein N(6)-(lipoyl)lysine from octanoyl-[acyl-carrier-protein]: step 1/2. Its function is as follows. Catalyzes the transfer of endogenously produced octanoic acid from octanoyl-acyl-carrier-protein onto the lipoyl domains of lipoate-dependent enzymes. Lipoyl-ACP can also act as a substrate although octanoyl-ACP is likely to be the physiological substrate. This Erwinia tasmaniensis (strain DSM 17950 / CFBP 7177 / CIP 109463 / NCPPB 4357 / Et1/99) protein is Octanoyltransferase.